A 213-amino-acid chain; its full sequence is mRNA-decapping protein OPG121 (213 aa).

Residues glutamate 16 and arginine 50 each coordinate N(7)-methyl-GTP. The region spanning 30-209 (KDTHVFAACI…EYLSYIYNIL (180 aa)) is the Nudix hydrolase domain. The Nudix box signature appears at 111–132 (GKLDKKESIKDCLRRELKEESD). Mg(2+) contacts are provided by glutamate 126 and glutamate 130. Aspartate 151 is a binding site for N(7)-methyl-GTP. Glutamate 183 provides a ligand contact to Mg(2+).

It belongs to the Nudix hydrolase family. In terms of assembly, interacts with the late transcription elongation factor VLTF-4/OPG110. Interacts with the late transcription factors VLTF-1. Mg(2+) is required as a cofactor. The cofactor is Mn(2+).

The enzyme catalyses a 5'-end (N(7)-methyl 5'-triphosphoguanosine)-guanosine in mRNA + H2O = a 5'-end phospho-guanosine in mRNA + N(7)-methyl-GDP + 2 H(+). Its function is as follows. Acts with RNA polymerase to initiate transcription from late gene promoters. In Cynomys gunnisoni (Gunnison's prairie dog), this protein is mRNA-decapping protein OPG121 (OPG121).